Reading from the N-terminus, the 40-residue chain is Meleagrin (40 aa).

At Gln-1 the chain carries Pyrrolidone carboxylic acid. Intrachain disulfides connect Cys-6–Cys-33, Cys-12–Cys-28, and Cys-16–Cys-32.

It belongs to the transferrin family.

The polypeptide is Meleagrin (Meleagris gallopavo (Wild turkey)).